The following is a 451-amino-acid chain: uncharacterized protein (451 aa).

One can recognise a TRAM domain in the interval 2–60 (NVVLKQRIPLKIKRMGINGEGIGFYKKTLIFVPGALKGEEVFCQISSVRRNFAEAKLLK). 4 residues coordinate [4Fe-4S] cluster: cysteine 73, cysteine 79, cysteine 82, and cysteine 162. S-adenosyl-L-methionine is bound by residues glutamine 283, tyrosine 312, aspartate 333, and aspartate 381. The active-site Nucleophile is cysteine 408.

This sequence belongs to the class I-like SAM-binding methyltransferase superfamily. RNA M5U methyltransferase family.

This is an uncharacterized protein from Streptococcus agalactiae serotype III (strain NEM316).